The sequence spans 214 residues: Ribosomal RNA small subunit methyltransferase G (214 aa).

S-adenosyl-L-methionine is bound by residues G73, L78, V124–E125, and R139.

Belongs to the methyltransferase superfamily. RNA methyltransferase RsmG family.

It is found in the cytoplasm. The enzyme catalyses guanosine(527) in 16S rRNA + S-adenosyl-L-methionine = N(7)-methylguanosine(527) in 16S rRNA + S-adenosyl-L-homocysteine. Its function is as follows. Specifically methylates the N7 position of guanine in position 527 of 16S rRNA. The sequence is that of Ribosomal RNA small subunit methyltransferase G from Aeromonas hydrophila subsp. hydrophila (strain ATCC 7966 / DSM 30187 / BCRC 13018 / CCUG 14551 / JCM 1027 / KCTC 2358 / NCIMB 9240 / NCTC 8049).